A 730-amino-acid polypeptide reads, in one-letter code: Elongation factor 2 (730 aa).

The region spanning 19 to 260 (VMIRNIAIIA…MVIRFLPSPI (242 aa)) is the tr-type G domain. Residues 28–35 (AHIDHGKT), 94–98 (DTPGH), and 148–151 (NKVD) each bind GTP. Diphthamide is present on H596.

Belongs to the TRAFAC class translation factor GTPase superfamily. Classic translation factor GTPase family. EF-G/EF-2 subfamily.

It is found in the cytoplasm. In terms of biological role, catalyzes the GTP-dependent ribosomal translocation step during translation elongation. During this step, the ribosome changes from the pre-translocational (PRE) to the post-translocational (POST) state as the newly formed A-site-bound peptidyl-tRNA and P-site-bound deacylated tRNA move to the P and E sites, respectively. Catalyzes the coordinated movement of the two tRNA molecules, the mRNA and conformational changes in the ribosome. This is Elongation factor 2 (fusA) from Methanococcoides methylutens.